Reading from the N-terminus, the 122-residue chain is Large ribosomal subunit protein uL14c (122 aa).

It belongs to the universal ribosomal protein uL14 family. In terms of assembly, part of the 50S ribosomal subunit.

It is found in the plastid. It localises to the chloroplast. Its function is as follows. Binds to 23S rRNA. This is Large ribosomal subunit protein uL14c from Guizotia abyssinica (Niger).